Reading from the N-terminus, the 269-residue chain is 4-hydroxy-tetrahydrodipicolinate reductase (269 aa).

NAD(+) contacts are provided by residues 10 to 15 (GANGRM), Glu-36, 99 to 101 (GTT), and 123 to 126 (AANF). Residue His-156 is the Proton donor/acceptor of the active site. Residue His-157 coordinates (S)-2,3,4,5-tetrahydrodipicolinate. Catalysis depends on Lys-160, which acts as the Proton donor. 166–167 (GT) lines the (S)-2,3,4,5-tetrahydrodipicolinate pocket.

This sequence belongs to the DapB family.

The protein localises to the cytoplasm. It catalyses the reaction (S)-2,3,4,5-tetrahydrodipicolinate + NAD(+) + H2O = (2S,4S)-4-hydroxy-2,3,4,5-tetrahydrodipicolinate + NADH + H(+). The enzyme catalyses (S)-2,3,4,5-tetrahydrodipicolinate + NADP(+) + H2O = (2S,4S)-4-hydroxy-2,3,4,5-tetrahydrodipicolinate + NADPH + H(+). It participates in amino-acid biosynthesis; L-lysine biosynthesis via DAP pathway; (S)-tetrahydrodipicolinate from L-aspartate: step 4/4. Its function is as follows. Catalyzes the conversion of 4-hydroxy-tetrahydrodipicolinate (HTPA) to tetrahydrodipicolinate. The sequence is that of 4-hydroxy-tetrahydrodipicolinate reductase from Neisseria meningitidis serogroup C (strain 053442).